The following is a 192-amino-acid chain: Protein GrpE (192 aa).

The interval 1 to 43 is disordered; it reads MSKEEFPHEKDLKDEVTPDKAPKKDPKAASKEEVKEDPAKDYE.

The protein belongs to the GrpE family. As to quaternary structure, homodimer.

It localises to the cytoplasm. In terms of biological role, participates actively in the response to hyperosmotic and heat shock by preventing the aggregation of stress-denatured proteins, in association with DnaK and GrpE. It is the nucleotide exchange factor for DnaK and may function as a thermosensor. Unfolded proteins bind initially to DnaJ; upon interaction with the DnaJ-bound protein, DnaK hydrolyzes its bound ATP, resulting in the formation of a stable complex. GrpE releases ADP from DnaK; ATP binding to DnaK triggers the release of the substrate protein, thus completing the reaction cycle. Several rounds of ATP-dependent interactions between DnaJ, DnaK and GrpE are required for fully efficient folding. This is Protein GrpE from Lactobacillus gasseri (strain ATCC 33323 / DSM 20243 / BCRC 14619 / CIP 102991 / JCM 1131 / KCTC 3163 / NCIMB 11718 / NCTC 13722 / AM63).